We begin with the raw amino-acid sequence, 508 residues long: Zinc finger CCCH-type with G patch domain-containing protein (508 aa).

The disordered stretch occupies residues 67-86 (QQESSHHDSGTPETDTKTSV). Positions 69 to 86 (ESSHHDSGTPETDTKTSV) are enriched in basic and acidic residues. Residues 161–188 (RSMVPCPYFLEGKCKFAGAECRFSHGYL) form a C3H1-type zinc finger. The disordered stretch occupies residues 253-282 (IYPLGPEEVESDSESDSQSDTGDSSSSKAA). Residues 259-269 (EEVESDSESDS) show a composition bias toward acidic residues. Low complexity predominate over residues 270–279 (QSDTGDSSSS). Residues 310–356 (TKGIGSKLMAKMGYIFGKGLGKDGEGRVEPIEVVVLPQGKSLDKCAE) enclose the G-patch domain. Positions 404–426 (SLHDLRVSHPGAKPDIRKTRKSA) are disordered.

It localises to the nucleus. Its function is as follows. Transcription repressor. The polypeptide is Zinc finger CCCH-type with G patch domain-containing protein (Nematostella vectensis (Starlet sea anemone)).